A 464-amino-acid chain; its full sequence is Sensor histidine kinase Hik34 (464 aa).

The 215-residue stretch at 235–449 (ALTHEVRTPL…ILTIYLKCEQ (215 aa)) folds into the Histidine kinase domain. His-238 is modified (phosphohistidine; by autocatalysis).

When expressed in E.coli autophosphorylates at 18 to 30 degrees Celsius; less phosphorylation occurs at 36 and none occurs at 42 or 48 degrees Celsius.

The enzyme catalyses ATP + protein L-histidine = ADP + protein N-phospho-L-histidine.. Member of a two-component system Hik34/Rre1, controlling expression of at least 20 genes in response to hyperosmotic stress (0.5 M sorbitol) or salt (0.5 M NaCl). Represses expression of heat shock genes under normal growth conditions. Required for survival of long-term heat shock exposure. This Synechocystis sp. (strain ATCC 27184 / PCC 6803 / Kazusa) protein is Sensor histidine kinase Hik34.